The chain runs to 497 residues: Aldehyde dehydrogenase (497 aa).

241 to 246 (GSTLVG) lines the NAD(+) pocket. The active-site Proton acceptor is Glu-264. Cys-298 (nucleophile) is an active-site residue.

It belongs to the aldehyde dehydrogenase family.

It catalyses the reaction an aldehyde + NAD(+) + H2O = a carboxylate + NADH + 2 H(+). It functions in the pathway alcohol metabolism; ethanol degradation; acetate from ethanol: step 2/2. In Emericella nidulans (strain FGSC A4 / ATCC 38163 / CBS 112.46 / NRRL 194 / M139) (Aspergillus nidulans), this protein is Aldehyde dehydrogenase (aldA).